A 207-amino-acid polypeptide reads, in one-letter code: uncharacterized protein (207 aa).

An N-terminal signal peptide occupies residues 1 to 19 (MRHGLLALICWLCCVVAHS).

It to P.aeruginosa PA4490 and T.maritima TM0986.

This is an uncharacterized protein from Escherichia coli (strain K12).